The sequence spans 101 residues: NAD(P)H-quinone oxidoreductase subunit 4L, chloroplastic (101 aa).

3 helical membrane passes run 2–22 (MLEHVLVLSAYLFSIGIYGLI), 32–52 (MCLELILNAVNINFVTFSDFF), and 61–81 (IFSIFVIAIAAAEAAIGPAIV).

The protein belongs to the complex I subunit 4L family. NDH is composed of at least 16 different subunits, 5 of which are encoded in the nucleus.

It localises to the plastid. The protein localises to the chloroplast thylakoid membrane. The enzyme catalyses a plastoquinone + NADH + (n+1) H(+)(in) = a plastoquinol + NAD(+) + n H(+)(out). It catalyses the reaction a plastoquinone + NADPH + (n+1) H(+)(in) = a plastoquinol + NADP(+) + n H(+)(out). NDH shuttles electrons from NAD(P)H:plastoquinone, via FMN and iron-sulfur (Fe-S) centers, to quinones in the photosynthetic chain and possibly in a chloroplast respiratory chain. The immediate electron acceptor for the enzyme in this species is believed to be plastoquinone. Couples the redox reaction to proton translocation, and thus conserves the redox energy in a proton gradient. This is NAD(P)H-quinone oxidoreductase subunit 4L, chloroplastic from Vitis vinifera (Grape).